We begin with the raw amino-acid sequence, 93 residues long: Aspartyl/glutamyl-tRNA(Asn/Gln) amidotransferase subunit C (93 aa).

This sequence belongs to the GatC family. Heterotrimer of A, B and C subunits.

The catalysed reaction is L-glutamyl-tRNA(Gln) + L-glutamine + ATP + H2O = L-glutaminyl-tRNA(Gln) + L-glutamate + ADP + phosphate + H(+). It catalyses the reaction L-aspartyl-tRNA(Asn) + L-glutamine + ATP + H2O = L-asparaginyl-tRNA(Asn) + L-glutamate + ADP + phosphate + 2 H(+). In terms of biological role, allows the formation of correctly charged Asn-tRNA(Asn) or Gln-tRNA(Gln) through the transamidation of misacylated Asp-tRNA(Asn) or Glu-tRNA(Gln) in organisms which lack either or both of asparaginyl-tRNA or glutaminyl-tRNA synthetases. The reaction takes place in the presence of glutamine and ATP through an activated phospho-Asp-tRNA(Asn) or phospho-Glu-tRNA(Gln). The protein is Aspartyl/glutamyl-tRNA(Asn/Gln) amidotransferase subunit C of Nautilia profundicola (strain ATCC BAA-1463 / DSM 18972 / AmH).